Reading from the N-terminus, the 89-residue chain is Large ribosomal subunit protein uL23cz/uL23cy (89 aa).

The protein belongs to the universal ribosomal protein uL23 family. As to quaternary structure, part of the 50S ribosomal subunit.

Its subcellular location is the plastid. It is found in the chloroplast. Functionally, binds to 23S rRNA. In Calycanthus floridus var. glaucus (Eastern sweetshrub), this protein is Large ribosomal subunit protein uL23cz/uL23cy (rpl23-A).